Consider the following 450-residue polypeptide: 23S rRNA (uracil(1939)-C(5))-methyltransferase RlmD (450 aa).

In terms of domain architecture, TRAM spans 1–62 (MPVAGPLDIV…PSYEQAGVVN (62 aa)). The [4Fe-4S] cluster site is built by cysteine 75, cysteine 81, cysteine 84, and cysteine 163. S-adenosyl-L-methionine contacts are provided by glutamine 271, phenylalanine 300, asparagine 305, glutamate 321, asparagine 349, and aspartate 370. Cysteine 406 (nucleophile) is an active-site residue.

This sequence belongs to the class I-like SAM-binding methyltransferase superfamily. RNA M5U methyltransferase family. RlmD subfamily.

The enzyme catalyses uridine(1939) in 23S rRNA + S-adenosyl-L-methionine = 5-methyluridine(1939) in 23S rRNA + S-adenosyl-L-homocysteine + H(+). Functionally, catalyzes the formation of 5-methyl-uridine at position 1939 (m5U1939) in 23S rRNA. The protein is 23S rRNA (uracil(1939)-C(5))-methyltransferase RlmD of Ralstonia pickettii (strain 12J).